The primary structure comprises 248 residues: Probable phosphatase VFMJ11_A0899 (248 aa).

Zn(2+) contacts are provided by His-8, His-10, His-16, His-41, Glu-74, His-101, His-131, Asp-193, and His-195.

The protein belongs to the PHP family. It depends on Zn(2+) as a cofactor.

The sequence is that of Probable phosphatase VFMJ11_A0899 from Aliivibrio fischeri (strain MJ11) (Vibrio fischeri).